Consider the following 260-residue polypeptide: Indole-3-glycerol phosphate synthase (260 aa).

The protein belongs to the TrpC family.

It carries out the reaction 1-(2-carboxyphenylamino)-1-deoxy-D-ribulose 5-phosphate + H(+) = (1S,2R)-1-C-(indol-3-yl)glycerol 3-phosphate + CO2 + H2O. It functions in the pathway amino-acid biosynthesis; L-tryptophan biosynthesis; L-tryptophan from chorismate: step 4/5. In Thermoanaerobacter pseudethanolicus (strain ATCC 33223 / 39E) (Clostridium thermohydrosulfuricum), this protein is Indole-3-glycerol phosphate synthase.